Consider the following 95-residue polypeptide: Cytochrome b-c1 complex subunit 8, mitochondrial (95 aa).

Residues 57 to 74 (FLYVAIPFVVVWSIWTRA) form a helical membrane-spanning segment.

The protein belongs to the UQCRQ/QCR8 family. Component of the ubiquinol-cytochrome c oxidoreductase (cytochrome b-c1 complex, complex III, CIII), a multisubunit enzyme composed of 10 subunits. The complex is composed of 3 respiratory subunits cytochrome b (COB), cytochrome c1 (CYT1) and Rieske protein (RIP1), 2 core protein subunits COR1 and QCR2, and 5 low-molecular weight protein subunits QCR6, QCR7, QCR8, QCR9 and QCR10. The complex exists as an obligatory dimer and forms supercomplexes (SCs) in the inner mitochondrial membrane with a monomer or a dimer of cytochrome c oxidase (complex IV, CIV), resulting in 2 different assemblies (supercomplexes III(2)IV and III(2)IV(2)).

The protein localises to the membrane. It localises to the mitochondrion inner membrane. Component of the ubiquinol-cytochrome c oxidoreductase, a multisubunit transmembrane complex that is part of the mitochondrial electron transport chain which drives oxidative phosphorylation. The complex plays an important role in the uptake of multiple carbon sources present in different host niches. This chain is Cytochrome b-c1 complex subunit 8, mitochondrial, found in Candida albicans (strain SC5314 / ATCC MYA-2876) (Yeast).